We begin with the raw amino-acid sequence, 98 residues long: Large ribosomal subunit protein uL23 (98 aa).

Belongs to the universal ribosomal protein uL23 family. In terms of assembly, part of the 50S ribosomal subunit. Contacts protein L29, and trigger factor when it is bound to the ribosome.

One of the early assembly proteins it binds 23S rRNA. One of the proteins that surrounds the polypeptide exit tunnel on the outside of the ribosome. Forms the main docking site for trigger factor binding to the ribosome. The chain is Large ribosomal subunit protein uL23 from Cereibacter sphaeroides (strain ATCC 17029 / ATH 2.4.9) (Rhodobacter sphaeroides).